Here is a 184-residue protein sequence, read N- to C-terminus: ATP synthase subunit b, chloroplastic (184 aa).

A helical membrane pass occupies residues 27 to 49; the sequence is LATNLINLSVVLGVLIFFGKGVL.

It belongs to the ATPase B chain family. In terms of assembly, F-type ATPases have 2 components, F(1) - the catalytic core - and F(0) - the membrane proton channel. F(1) has five subunits: alpha(3), beta(3), gamma(1), delta(1), epsilon(1). F(0) has four main subunits: a(1), b(1), b'(1) and c(10-14). The alpha and beta chains form an alternating ring which encloses part of the gamma chain. F(1) is attached to F(0) by a central stalk formed by the gamma and epsilon chains, while a peripheral stalk is formed by the delta, b and b' chains.

The protein resides in the plastid. The protein localises to the chloroplast thylakoid membrane. In terms of biological role, f(1)F(0) ATP synthase produces ATP from ADP in the presence of a proton or sodium gradient. F-type ATPases consist of two structural domains, F(1) containing the extramembraneous catalytic core and F(0) containing the membrane proton channel, linked together by a central stalk and a peripheral stalk. During catalysis, ATP synthesis in the catalytic domain of F(1) is coupled via a rotary mechanism of the central stalk subunits to proton translocation. Its function is as follows. Component of the F(0) channel, it forms part of the peripheral stalk, linking F(1) to F(0). The protein is ATP synthase subunit b, chloroplastic of Nymphaea alba (White water-lily).